A 302-amino-acid polypeptide reads, in one-letter code: tRNA dimethylallyltransferase (302 aa).

9-16 (GATATGKS) contacts ATP. 11–16 (TATGKS) contacts substrate. Residues 34–37 (DSRQ) are interaction with substrate tRNA.

It belongs to the IPP transferase family. In terms of assembly, monomer. It depends on Mg(2+) as a cofactor.

It catalyses the reaction adenosine(37) in tRNA + dimethylallyl diphosphate = N(6)-dimethylallyladenosine(37) in tRNA + diphosphate. In terms of biological role, catalyzes the transfer of a dimethylallyl group onto the adenine at position 37 in tRNAs that read codons beginning with uridine, leading to the formation of N6-(dimethylallyl)adenosine (i(6)A). The protein is tRNA dimethylallyltransferase of Nostoc punctiforme (strain ATCC 29133 / PCC 73102).